The primary structure comprises 1254 residues: Histone-lysine N-methyltransferase eggless (1254 aa).

Disordered regions lie at residues 24 to 209 (ALVE…EIPR) and 228 to 248 (PVPR…SKTT). Composition is skewed to basic and acidic residues over residues 40 to 57 (TPEK…KDLT) and 65 to 81 (KSQE…KDPE). Positions 112–125 (SVELLESPLKSPSS) are enriched in low complexity. Basic and acidic residues predominate over residues 136–162 (LEEKEKPGPAKELEPKESEPDSKESSK). The segment covering 172–181 (ELISSPTSDD) has biased composition (polar residues). Composition is skewed to basic and acidic residues over residues 182-197 (SLAK…EHGQ) and 234-243 (AMQESKETQK). Residues 391–416 (TILQAKIERLAKKFEEVDLQLAQVQG) adopt a coiled-coil conformation. Tudor domains follow at residues 535 to 607 (RLPI…SEKV) and 634 to 691 (QCTK…KETQ). A disordered region spans residues 734–760 (ARKSTSKSGSPASTAAPPTGSSSSSAV). Residues 739 to 759 (SKSGSPASTAAPPTGSSSSSA) are compositionally biased toward low complexity. The 67-residue stretch at 811-877 (LDSYSPLSKP…DNFDFTPDLR (67 aa)) folds into the MBD domain. The 73-residue stretch at 939-1011 (VCCDCEDDCS…NCLNRVVQHS (73 aa)) folds into the Pre-SET domain. Residues Cys-941, Cys-943, Cys-947, Cys-953, Cys-955, Cys-993, Cys-997, Cys-999, and Cys-1003 each contribute to the Zn(2+) site. The SET domain occupies 1014-1229 (MKLQVFKTSN…SGTELTWNYN (216 aa)). S-adenosyl-L-methionine is bound by residues 1024 to 1026 (RGW), Asp-1062, and Tyr-1064. The segment covering 1081-1090 (YESDVERADL) has biased composition (basic and acidic residues). Positions 1081 to 1139 (YESDVERADLDHEDDNYGPDAEDDDDFRPNNYYQKKKEKLRSSRSNSSSTQNTELDSQE) are disordered. A compositionally biased stretch (acidic residues) spans 1091 to 1106 (DHEDDNYGPDAEDDDD). Over residues 1123–1134 (SRSNSSSTQNTE) the composition is skewed to low complexity. S-adenosyl-L-methionine-binding positions include Arg-1183 and 1186–1187 (NH). Residues Cys-1189, Cys-1242, Cys-1244, and Cys-1249 each contribute to the Zn(2+) site. The Post-SET domain occupies 1238-1254 (KVLYCQCGAQNCRVRLL).

This sequence belongs to the class V-like SAM-binding methyltransferase superfamily. Histone-lysine methyltransferase family. Suvar3-9 subfamily.

The protein resides in the nucleus. Its subcellular location is the chromosome. The enzyme catalyses L-lysyl(9)-[histone H3] + 3 S-adenosyl-L-methionine = N(6),N(6),N(6)-trimethyl-L-lysyl(9)-[histone H3] + 3 S-adenosyl-L-homocysteine + 3 H(+). In terms of biological role, histone methyltransferase that specifically trimethylates 'Lys-9' of histone H3 in ovary. H3 'Lys-9' trimethylation represents a specific tag for epigenetic transcriptional repression by recruiting Su(var)205/HP1 to methylated histones. Plays a central role during oogenesis. This chain is Histone-lysine N-methyltransferase eggless (egg), found in Drosophila pseudoobscura pseudoobscura (Fruit fly).